Consider the following 186-residue polypeptide: Peptide deformylase (186 aa).

Fe cation-binding residues include Cys113 and His156. Glu157 is a catalytic residue. His160 is a binding site for Fe cation.

This sequence belongs to the polypeptide deformylase family. Fe(2+) is required as a cofactor.

It catalyses the reaction N-terminal N-formyl-L-methionyl-[peptide] + H2O = N-terminal L-methionyl-[peptide] + formate. Removes the formyl group from the N-terminal Met of newly synthesized proteins. Requires at least a dipeptide for an efficient rate of reaction. N-terminal L-methionine is a prerequisite for activity but the enzyme has broad specificity at other positions. In Limosilactobacillus reuteri (strain DSM 20016) (Lactobacillus reuteri), this protein is Peptide deformylase.